The sequence spans 333 residues: Cathepsin M (333 aa).

Residues 1–15 (MTSAIFLAMLCLGMA) form the signal peptide. A propeptide spans 16–113 (LPSPAPDPIL…KSVQKRLSVN (98 aa)) (activation peptide). Disulfide bonds link cysteine 135/cysteine 178 and cysteine 169/cysteine 211. Cysteine 138 is an active-site residue. 3 N-linked (GlcNAc...) asparagine glycosylation sites follow: asparagine 217, asparagine 221, and asparagine 268. Cysteine 269 and cysteine 322 are disulfide-bonded. Catalysis depends on residues histidine 276 and asparagine 300.

This sequence belongs to the peptidase C1 family. In terms of tissue distribution, placenta.

It is found in the lysosome. The sequence is that of Cathepsin M (Ctsm) from Mus musculus (Mouse).